The following is a 373-amino-acid chain: Mating-type protein A-2 (373 aa).

Residues 1-22 (MNLLNMQPKRSEQPAMFEENRA) are disordered.

This sequence to P.anserina SMR1.

Required, together with mating-type protein A-3, for efficient ascospore formation. This Neurospora crassa (strain ATCC 24698 / 74-OR23-1A / CBS 708.71 / DSM 1257 / FGSC 987) protein is Mating-type protein A-2 (matA-2).